A 71-amino-acid polypeptide reads, in one-letter code: DNA-directed RNA polymerase subunit epsilon (71 aa).

This sequence belongs to the RNA polymerase subunit epsilon family. Monomer. RNAP is composed of a core of 2 alpha, a beta and a beta' subunit. The core is associated with a delta subunit, and at least one of epsilon or omega. When a sigma factor is associated with the core the holoenzyme is formed, which can initiate transcription.

It catalyses the reaction RNA(n) + a ribonucleoside 5'-triphosphate = RNA(n+1) + diphosphate. A non-essential component of RNA polymerase (RNAP). Has a similar structure to bacteriophage T7 protein Gp2 (AC P03704), which is known to bind to RNAP in the DNA binding-cleft. Unlike Gp2 however, this protein does not inhibit transcription initiation. The polypeptide is DNA-directed RNA polymerase subunit epsilon (Geobacillus stearothermophilus (strain DSM 13240 / CIP 106956 / 10)).